Reading from the N-terminus, the 295-residue chain is Phosphoribosylaminoimidazole-succinocarboxamide synthase (295 aa).

It belongs to the SAICAR synthetase family.

It carries out the reaction 5-amino-1-(5-phospho-D-ribosyl)imidazole-4-carboxylate + L-aspartate + ATP = (2S)-2-[5-amino-1-(5-phospho-beta-D-ribosyl)imidazole-4-carboxamido]succinate + ADP + phosphate + 2 H(+). Its pathway is purine metabolism; IMP biosynthesis via de novo pathway; 5-amino-1-(5-phospho-D-ribosyl)imidazole-4-carboxamide from 5-amino-1-(5-phospho-D-ribosyl)imidazole-4-carboxylate: step 1/2. This Halorhodospira halophila (strain DSM 244 / SL1) (Ectothiorhodospira halophila (strain DSM 244 / SL1)) protein is Phosphoribosylaminoimidazole-succinocarboxamide synthase.